The chain runs to 1187 residues: RNA helicase Mov10l1 (1187 aa).

Residues 273-347 (RSKSCPGAAA…EPEPGGLIPP (75 aa)) are disordered. 2 stretches are compositionally biased toward basic and acidic residues: residues 296–307 (HHREDKTDEIPE) and 322–339 (ACKE…KQEP). 5 tandem repeats follow at residues 642 to 652 (TRNDSQSITNI), 653 to 663 (IRNDGQSITNV), 664 to 674 (TRNDGQPITKV), 675 to 685 (TRNNSQSITNI), and 686 to 696 (TRNDGQPITKN). Residues 642-696 (TRNDSQSITNIIRNDGQSITNVTRNDGQPITKVTRNNSQSITNITRNDGQPITKN) form a 5 X 11 AA tandem repeats of [TI]-R-N-[DN]-[GS]-Q-[SP]-I-T-[NK]-[IVN] region. Residues 686 to 727 (TRNDGQPITKNKKTVKDQTKHTTEERHVGTTDQPEKASSTAE) are disordered. A compositionally biased stretch (basic and acidic residues) spans 699 to 720 (TVKDQTKHTTEERHVGTTDQPE). 772 to 779 (GPPGTGKT) is an ATP binding site. The short motif at 888-891 (DEAG) is the DEAG box element.

The protein belongs to the DNA2/NAM7 helicase family. SDE3 subfamily. Interacts with PIWIL1. Interacts with PIWIL2. Interacts with PIWIL4. Interacts with HSPA2. Interacts with PLD6. As to expression, isoform 1: Specifically expressed in testis. Isoform 1: In testis, present in pachytene spermatocytes but absent in postmeiotic spermatids (at protein level). Isoform 2: Present in cardiomyocytes (at protein level). Isoform 2: Heart specific. Isoform 3: Heart specific and is specifically expressed in cardiac myocytes.

The protein localises to the cytoplasm. The catalysed reaction is ATP + H2O = ADP + phosphate + H(+). In terms of biological role, ATP-dependent RNA helicase required during spermatogenesis to repress transposable elements and prevent their mobilization, which is essential for germline integrity. Acts via the piRNA metabolic process, which mediates the repression of transposable elements during meiosis by forming complexes composed of piRNAs and Piwi proteins and governs the methylation and subsequent repression of transposons. Involved in the primary piRNA metabolic process. Specifically binds to piRNA precursors and promotes the generation of intermediate piRNA processing fragments that are subsequently loaded to Piwi proteins. Acts via its ATP-dependent RNA helicase activity: displays 5'-3' RNA unwinding activity and probably mediates unwinding and funneling of single-stranded piRNA precursor transcripts to the endonuclease that catalyzes the first cleavage step of piRNA processing to generate piRNA intermediate fragments that are subsequently loaded to Piwi proteins. Functionally, may act downstream of MEF2C during heart formation. Acts as a cardiac-specific suppressor of cardiomyocyte hypertrophy and cell cycle progression, suggesting that it may suppress these processes through the regulation of CDKN1A. Such results however require additional evidence. The protein is RNA helicase Mov10l1 of Mus musculus (Mouse).